The primary structure comprises 574 residues: Developmental and secondary metabolism regulator veA (574 aa).

Disordered regions lie at residues 1-22 (MATRAPLAPPPNETEASVSRIT), 39-60 (ERARACGAGAKSSADRRPVDPP), 255-500 (RSSD…GAGK), and 513-540 (RSYEDSFGHDDRPLYNGMRPDTESYPRR). The region spanning 25-230 (GKKLTYKLNV…AEQGCRVRIR (206 aa)) is the Velvet domain. Positions 39–44 (ERARAC) match the Nuclear localization signal motif. Composition is skewed to pro residues over residues 314–323 (RPLPPAPGPA) and 330–341 (PAPPAPPAPPSH). 4 stretches are compositionally biased toward polar residues: residues 343–353 (PGYQSHLSFGS), 385–394 (HARNPSTSAE), 406–415 (RMSTERSSYP), and 448–458 (VAQSAAPRSQT). The PEST stretch occupies residues 457–501 (QTPSSSLVPSLPPLKALSGDYPNNLSQSSSSTSQSPSHDLGAGKK). Low complexity-rich tracts occupy residues 459–474 (PSSSLVPSLPPLKALS) and 482–493 (SQSSSSTSQSPS). Basic and acidic residues predominate over residues 513–525 (RSYEDSFGHDDRP).

The protein belongs to the velvet family. VeA subfamily. In terms of assembly, component of the heterotrimeric velvet complex composed of laeA, veA and velB; VeA acting as a bridging protein between laeA and velB.

The protein resides in the nucleus. It localises to the cytoplasm. In terms of biological role, component of the velvet transcription factor complex that controls sexual/asexual developmental ratio in response to light, promoting sexual development in the darkness while stimulating asexual sporulation under illumination. The velvet complex hat acts as a global regulator for secondary metabolite gene expression. Controls the expression of the penicillin gene cluster. In Aspergillus oryzae (strain ATCC 42149 / RIB 40) (Yellow koji mold), this protein is Developmental and secondary metabolism regulator veA.